A 761-amino-acid polypeptide reads, in one-letter code: 1,4-alpha-glucan branching enzyme GlgB (761 aa).

Aspartate 431 functions as the Nucleophile in the catalytic mechanism. Catalysis depends on glutamate 484, which acts as the Proton donor.

The protein belongs to the glycosyl hydrolase 13 family. GlgB subfamily. In terms of assembly, monomer.

The enzyme catalyses Transfers a segment of a (1-&gt;4)-alpha-D-glucan chain to a primary hydroxy group in a similar glucan chain.. Its pathway is glycan biosynthesis; glycogen biosynthesis. Its function is as follows. Catalyzes the formation of the alpha-1,6-glucosidic linkages in glycogen by scission of a 1,4-alpha-linked oligosaccharide from growing alpha-1,4-glucan chains and the subsequent attachment of the oligosaccharide to the alpha-1,6 position. The chain is 1,4-alpha-glucan branching enzyme GlgB from Synechococcus sp. (strain WH7803).